The sequence spans 1074 residues: Telomerase reverse transcriptase (1074 aa).

The segment at 240-265 (DKVSCETMQDGESGKTTLVQKQPGSK) is disordered. Polar residues predominate over residues 253–262 (GKTTLVQKQP). Residues 300–305 (TLGFLY) carry the TFLY; involved in RNA binding motif. Interaction with RNA template regions lie at residues 355–360 (LPRRFF) and 461–486 (WKIKVNNCDWLKISKTGRVPPSELSY). One can recognise a Reverse transcriptase domain in the interval 552 to 877 (TPDQVAALPK…CLFPWCGLLL (326 aa)). Residues Asp649, Asp810, and Asp811 each contribute to the Mg(2+) site.

This sequence belongs to the reverse transcriptase family. Telomerase subfamily. As to quaternary structure, catalytic subunit of the telomerase holoenzyme complex composed minimally of TERT and the telomerase RNA template component (TERC). As to expression, detected at highest levels in gill, ovary and testis, and at lower levels in brain, eye, heart, skin, spleen and stomach.

It localises to the nucleus. Its subcellular location is the chromosome. The protein resides in the telomere. It catalyses the reaction DNA(n) + a 2'-deoxyribonucleoside 5'-triphosphate = DNA(n+1) + diphosphate. Its function is as follows. Telomerase is a ribonucleoprotein enzyme essential for the replication of chromosome termini in most eukaryotes. It elongates telomeres. It is a reverse transcriptase that adds simple sequence repeats to chromosome ends by copying a template sequence within the RNA component of the enzyme. In Takifugu rubripes (Japanese pufferfish), this protein is Telomerase reverse transcriptase.